A 64-amino-acid chain; its full sequence is Large ribosomal subunit protein bL35 (64 aa).

The tract at residues 1-20 is disordered; it reads MKQKTHKGTAKRIKVTGSGK.

Belongs to the bacterial ribosomal protein bL35 family.

This Corynebacterium urealyticum (strain ATCC 43042 / DSM 7109) protein is Large ribosomal subunit protein bL35.